The chain runs to 328 residues: Cell division protein ZipA (328 aa).

Over 1–4 the chain is Periplasmic; it reads MDLN. The helical transmembrane segment at 5–25 threads the bilayer; that stretch reads TILIIVGIVALVALIVHGLWS. The Cytoplasmic segment spans residues 26 to 328; it reads NRREKSKYFD…NAEQAYLARV (303 aa). The segment at 44 to 82 is disordered; sequence SLTSRSHTQEEMVQPNNISPNTYVENGHTPIPQPTTEKL. The span at 57-67 shows a compositional bias: polar residues; sequence QPNNISPNTYV.

Belongs to the ZipA family. As to quaternary structure, interacts with FtsZ via their C-terminal domains.

It is found in the cell inner membrane. Essential cell division protein that stabilizes the FtsZ protofilaments by cross-linking them and that serves as a cytoplasmic membrane anchor for the Z ring. Also required for the recruitment to the septal ring of downstream cell division proteins. The protein is Cell division protein ZipA of Haemophilus influenzae (strain ATCC 51907 / DSM 11121 / KW20 / Rd).